Consider the following 344-residue polypeptide: Dihydroorotate dehydrogenase (quinone) (344 aa).

FMN contacts are provided by residues 65-69 (AGFDK) and T89. Residue K69 participates in substrate binding. 114 to 118 (NRMGF) lines the substrate pocket. FMN contacts are provided by N145 and N178. N178 contributes to the substrate binding site. Residue S181 is the Nucleophile of the active site. Residue N183 participates in substrate binding. K215 and T243 together coordinate FMN. 244–245 (NT) provides a ligand contact to substrate. Residues G269, G298, and 319 to 320 (YT) contribute to the FMN site.

Belongs to the dihydroorotate dehydrogenase family. Type 2 subfamily. As to quaternary structure, monomer. FMN serves as cofactor.

The protein resides in the cell membrane. It catalyses the reaction (S)-dihydroorotate + a quinone = orotate + a quinol. It participates in pyrimidine metabolism; UMP biosynthesis via de novo pathway; orotate from (S)-dihydroorotate (quinone route): step 1/1. Functionally, catalyzes the conversion of dihydroorotate to orotate with quinone as electron acceptor. This is Dihydroorotate dehydrogenase (quinone) from Clavibacter sepedonicus (Clavibacter michiganensis subsp. sepedonicus).